The primary structure comprises 483 residues: MYLSFYITDTKNKLIFQYLLGATAPSFKHLWTRVQSTCPQLLEDSSSDDYLDHSMVGRDLEVYKYFSVINKLNYWCLASTSKSKGPLDCFTFLETIDRILLEYFDKDKLSIKKIVNNYDRISLIFNCCVEAGEPNVSDMLYVNKIKEAVPERSDLSKFISSTAHNLQQAVQLPQQRQQQLQQNQISRGSNSLIENEEIVPWRTSRASKHENNELYVDLLETFHVVFEKKKSHLRLLTGSIHGIVDVRSYLNDNPLVAVKLNTMGNDIGIPSLHDCVEINDGVFSPSNITFIPPDGKFRLLEYSVDLSSQVKQSGVRMNSIGLMSLHFQNGLGKDSDEFELSLNIENFKKVSQVDDLKIDLQFNVENADPNEIAYKIKILRNTHGRFENSIIMGQGQWIFDKSTATGTVPVLRGCIEYENTGPNFTKKVDLQTVSLEYSYIGQSASGIYVEAIDIVSGLTIGKNTKLYKGAKYKTQTGNFQVRL.

The MHD domain occupies 211–482 (NNELYVDLLE…KTQTGNFQVR (272 aa)).

Belongs to the adaptor complexes medium subunit family. As to quaternary structure, adaptor protein complex 3 (AP-3) is a heterotetramer composed of 2 large adaptins (APL5 and APL6), a medium adaptin (APM3) and a small adaptin (APS3).

The protein resides in the golgi apparatus. It localises to the cytoplasmic vesicle membrane. Part of the AP-3 complex, an adaptor-related complex which is not clathrin-associated. The complex is associated with the Golgi region as well as more peripheral structures. It facilitates the budding of vesicles from the Golgi membrane and may be directly involved in trafficking to the vacuole. Required for the transport via the ALP pathway, which directs the transport of the cargo proteins PHO8 and VAM3 to the vacuole. The protein is AP-3 complex subunit mu (APM3) of Saccharomyces cerevisiae (strain ATCC 204508 / S288c) (Baker's yeast).